The chain runs to 276 residues: Protein canopy homolog 3 (276 aa).

Residues 1 to 16 form the signal peptide; that stretch reads MNVFISVVLFLGSARA. Residues 30 to 269 form the Saposin B-type domain; sequence NKCEVCKFVS…EEEIQKKVPL (240 aa). 3 disulfide bridges follow: C32/C190, C35/C178, and C88/C150. A coiled-coil region spans residues 137–162; the sequence is NETSAEVADLKKQCDVMVEQYEDVIE. The segment at 206–276 is disordered; that stretch reads AEDKKKKKGK…VPLNQPKTEL (71 aa). 2 stretches are compositionally biased toward basic residues: residues 210–219 and 228–239; these read KKKKGKKKKG and KEKKVKKKKKKS. Basic and acidic residues predominate over residues 240-252; it reads KISDSESSKRRME.

The protein belongs to the canopy family.

It localises to the endoplasmic reticulum. Toll-like receptor (TLR)-specific co-chaperone for HSP90B1. Required for proper TLR folding and hence controls TLR exit from the endoplasmic reticulum. Consequently, required for immune responses. The sequence is that of Protein canopy homolog 3 (cnpy3) from Danio rerio (Zebrafish).